The chain runs to 120 residues: MALKIRLSRGGSKKRPYYHIVVADARSPRDGRFLERVGAWDPMLPKDKPRVKLNEDRIQHWLNQGAQPTDRVLRFLDAAGLKKRPARNNPHKGEPGKKAQERIAAAKQAAEDAKAAEASA.

Residues 80 to 120 (GLKKRPARNNPHKGEPGKKAQERIAAAKQAAEDAKAAEASA) are disordered. The span at 81 to 90 (LKKRPARNNP) shows a compositional bias: basic residues. Basic and acidic residues-rich tracts occupy residues 91–101 (HKGEPGKKAQE) and 109–120 (AAEDAKAAEASA).

The protein belongs to the bacterial ribosomal protein bS16 family.

The chain is Small ribosomal subunit protein bS16 from Bartonella bacilliformis (strain ATCC 35685 / KC583 / Herrer 020/F12,63).